We begin with the raw amino-acid sequence, 138 residues long: Acidic phospholipase A2 AplTX-I (138 aa).

Residues 1–16 form the signal peptide; sequence MRTLWIMAVLLLGVEG. 7 cysteine pairs are disulfide-bonded: C42-C131, C44-C60, C59-C111, C65-C138, C66-C104, C73-C97, and C91-C102. Ca(2+) is bound by residues Y43, G45, and G47. H63 is an active-site residue. Residue D64 participates in Ca(2+) binding. The active site involves D105.

As to quaternary structure, monomer. The cofactor is Ca(2+). Expressed by the venom gland.

The protein localises to the secreted. The catalysed reaction is a 1,2-diacyl-sn-glycero-3-phosphocholine + H2O = a 1-acyl-sn-glycero-3-phosphocholine + a fatty acid + H(+). With respect to regulation, inhibited by divalent cations different from calcium ions (cadmium, magnesium, manganese, zinc), since they act as competitive antagonists of this cofactor. Functionally, snake venom phospholipase A2 (PLA2) that triggers a high neuromuscular toxicity in chick biventer cervicis preparations, but not in mouse phrenic nerve-diaphragm (PND) preparations, suggesting a selective neurotoxin activity towards birds. Does not induce myotoxic, coagulant, anticoagulant, edema, and antibacterial activities. PLA2 catalyzes the calcium-dependent hydrolysis of the 2-acyl groups in 3-sn-phosphoglycerides. The sequence is that of Acidic phospholipase A2 AplTX-I from Agkistrodon piscivorus leucostoma (Western cottonmouth).